A 207-amino-acid polypeptide reads, in one-letter code: MPKVAIYNVSGQQVSEIELSENVFGVEVNEHAMYEVVKNQLANRRQGTQSAKTRAEVRGGGRKPWKQKGTGRARVGSIRSPLWVGGGIVFAPKPRDYSYTIPKKVRRLALKSALTSKVNSNELIVLDELKLDAPKTKEMVNILKNLNVDKKALIVMGEKSEAVIKSANNIQGVQTALVNTINVYDILKYDKLIITKDAVQKVEEVYA.

The interval 44–71 (RRQGTQSAKTRAEVRGGGRKPWKQKGTG) is disordered. The segment covering 60–71 (GGRKPWKQKGTG) has biased composition (basic residues).

Belongs to the universal ribosomal protein uL4 family. Part of the 50S ribosomal subunit.

Its function is as follows. One of the primary rRNA binding proteins, this protein initially binds near the 5'-end of the 23S rRNA. It is important during the early stages of 50S assembly. It makes multiple contacts with different domains of the 23S rRNA in the assembled 50S subunit and ribosome. Forms part of the polypeptide exit tunnel. This is Large ribosomal subunit protein uL4 from Alkaliphilus oremlandii (strain OhILAs) (Clostridium oremlandii (strain OhILAs)).